The following is a 79-amino-acid chain: Exodeoxyribonuclease 7 small subunit (79 aa).

Belongs to the XseB family. Heterooligomer composed of large and small subunits.

The protein resides in the cytoplasm. The catalysed reaction is Exonucleolytic cleavage in either 5'- to 3'- or 3'- to 5'-direction to yield nucleoside 5'-phosphates.. Functionally, bidirectionally degrades single-stranded DNA into large acid-insoluble oligonucleotides, which are then degraded further into small acid-soluble oligonucleotides. The chain is Exodeoxyribonuclease 7 small subunit from Dechloromonas aromatica (strain RCB).